Here is a 351-residue protein sequence, read N- to C-terminus: Dihydroorotate dehydrogenase (quinone) (351 aa).

Residues 67-71 (AGFDK) and T91 each bind FMN. Residue K71 participates in substrate binding. 116-120 (NAMGF) is a substrate binding site. FMN-binding residues include N145 and N178. Substrate is bound at residue N178. S181 (nucleophile) is an active-site residue. A substrate-binding site is contributed by N183. The FMN site is built by K214 and T242. A substrate-binding site is contributed by 243 to 244 (NT). FMN-binding positions include G262, G291, and 312–313 (YS).

The protein belongs to the dihydroorotate dehydrogenase family. Type 2 subfamily. In terms of assembly, monomer. FMN serves as cofactor.

Its subcellular location is the cell membrane. The catalysed reaction is (S)-dihydroorotate + a quinone = orotate + a quinol. The protein operates within pyrimidine metabolism; UMP biosynthesis via de novo pathway; orotate from (S)-dihydroorotate (quinone route): step 1/1. In terms of biological role, catalyzes the conversion of dihydroorotate to orotate with quinone as electron acceptor. This chain is Dihydroorotate dehydrogenase (quinone), found in Helicobacter pylori (strain HPAG1).